The sequence spans 204 residues: Threonylcarbamoyl-AMP synthase (204 aa).

The YrdC-like domain maps to 10-204; it reads ADELDLVANY…KDLLAGHILR (195 aa).

Belongs to the SUA5 family. TsaC subfamily.

It is found in the cytoplasm. The catalysed reaction is L-threonine + hydrogencarbonate + ATP = L-threonylcarbamoyladenylate + diphosphate + H2O. In terms of biological role, required for the formation of a threonylcarbamoyl group on adenosine at position 37 (t(6)A37) in tRNAs that read codons beginning with adenine. Catalyzes the conversion of L-threonine, HCO(3)(-)/CO(2) and ATP to give threonylcarbamoyl-AMP (TC-AMP) as the acyladenylate intermediate, with the release of diphosphate. In Moraxella catarrhalis (strain BBH18), this protein is Threonylcarbamoyl-AMP synthase.